Here is a 104-residue protein sequence, read N- to C-terminus: Large ribosomal subunit protein uL24 (104 aa).

This sequence belongs to the universal ribosomal protein uL24 family. Part of the 50S ribosomal subunit.

Functionally, one of two assembly initiator proteins, it binds directly to the 5'-end of the 23S rRNA, where it nucleates assembly of the 50S subunit. In terms of biological role, one of the proteins that surrounds the polypeptide exit tunnel on the outside of the subunit. This Buchnera aphidicola subsp. Baizongia pistaciae (strain Bp) protein is Large ribosomal subunit protein uL24.